Consider the following 582-residue polypeptide: uncharacterized protein (582 aa).

Transmembrane regions (helical) follow at residues 29 to 49 (LFIV…FAAL), 117 to 137 (ISAP…MGLA), 155 to 175 (VWAT…MIIV), 225 to 245 (YVYI…YFLL), 254 to 274 (FISI…YLLI), 287 to 307 (ATVI…IVLI), 329 to 349 (YLYL…ALSV), 376 to 396 (SIFG…WGLI), 432 to 452 (IVYL…LFNI), 458 to 478 (LVVS…IALS), 491 to 511 (IGMA…PVFF), and 523 to 543 (IYLY…GNWI).

The protein resides in the cell membrane. This is an uncharacterized protein from Mycoplasmoides gallisepticum (strain R(low / passage 15 / clone 2)) (Mycoplasma gallisepticum).